A 50-amino-acid chain; its full sequence is Nosiheptide precursor (50 aa).

Residues 38–39 constitute a cross-link (thiazole-4-carboxylic acid (Ser-Cys)); it reads SC. The 3-hydroxypyridine-2,5-dicarboxylic acid (Ser-Cys) (with S-47) cross-link spans 38–46; that stretch reads SCTTCECCC. Residues 38 to 47 constitute a cross-link (3-hydroxypyridine-2,5-dicarboxylic acid (Ser-Ser) (with C-46)); that stretch reads SCTTCECCCS. Positions 41 to 42 form a cross-link, thiazole-4-carboxylic acid (Thr-Cys); the sequence is TC. Glu-43 carries the post-translational modification 4-hydroxyglutamate. Residues 43–44 constitute a cross-link (thiazole-4-carboxylic acid (Glu-Cys)); the sequence is EC. Residues 43-45 constitute a cross-link (2-(cystein-S-ylcarbonyl)-3-methyl-4-(glutam-5-yloxy)methylindole (Glu-Cys)); it reads ECC. The thiazole-4-carboxylic acid (Cys-Cys) cross-link spans 45-46; it reads CC. A cross-link (thiazole-4-carboxylic acid (Ser-Cys)) is located at residues 47 to 48; it reads SC. Position 49 is a 2,3-didehydroalanine (Ser) (Ser-49). Serine amide; atypical is present on Ser-49.

Belongs to the thiocillin family. The amidation of Ser-49 is produced by the oxidative cleavage of Ser-50 rather than of a glycine, as in eukaryotes.

Functionally, inhibits bacterial protein biosynthesis by binding to ribosomes. Specifically, binds to the complex of 23S rRNA and ribosomal protein L11 (RPLK) in the 50S ribosomal subunit. While allowing a weak binding of elongation factor G (EF-G) to the ribosome and subsequent GTP-hydrolysis, probably impairs conformational changes in both the ribosome and EF-G which are necessary for translocation. In vitro, inhibits Gram-positive bacteria S.aureus strain 209P (MIC=0.0009 ug/ml), S.aureus strain 133 (MIC=0.0019 ug/ml), S.aureus strain B3 (MIC=0.003 ug/ml), S.aureus strain Hb (MIC=0.003 ug/ml), M.citreus strain ATCC 8411 (MIC=0.0038 ug/ml), M.lysodeikticus strain ATCC 4698 (MIC=0.003 ug/ml), S.lutea strain ATCC 9341 (MIC=0.0011 ug/ml), S.faecalis strain ATCC 9790 (MIC=0.0007 ug/ml), S.viridans (MIC=0.0065 ug/ml), S.pyogenes hemolyticus strain Dig7 (MIC=0.00028 ug/ml), D.pneumoniae strain Til (MIC=0.00015 ug/ml), N.catrrhalis (MIC=0.0017 ug/ml), L.casei strain ATCC 6633 (MIC=0.003 ug/ml), B.cereus strain ATCC 6630 (MIC=0.0071 ug/ml) and various isolates of L.monocytogenes. In vitro, inhibits Gram-negative bacterium P.multocida strain A125 (MIC=0.0024 ug/ml) but not M.smegmatis strain ATCC 6630, S.typhimurium, A.aerogenes strain ATCC 8308, P.vulgaris, K.pneumoniae strain ATCC 10031, S.marcescens strain A476, P.aeruginosa strain Bass or B.bronchiseptica strain CN387. Does not inhibit Gram-negative bacterium E.coli strain ATCC 9637 but does inhibit purified ribosomes from E.coli. In vivo, has no systemic effect in mice infected with staphylococci or streptococci when applied orally or subcutaneously. Has a local effect in mice infected subcutaneously or intraperitoneally with staphylococci when applied immediately afterwards. Is not toxic to mice. In Streptomyces actuosus, this protein is Nosiheptide precursor.